Here is a 122-residue protein sequence, read N- to C-terminus: NADPH-dependent 7-cyano-7-deazaguanine reductase (122 aa).

Cys34 serves as the catalytic Thioimide intermediate. The active-site Proton donor is the Asp41. Residues 56 to 58 (VEL) and 75 to 76 (HE) each bind substrate.

Belongs to the GTP cyclohydrolase I family. QueF type 1 subfamily.

It localises to the cytoplasm. It carries out the reaction 7-aminomethyl-7-carbaguanine + 2 NADP(+) = 7-cyano-7-deazaguanine + 2 NADPH + 3 H(+). The protein operates within tRNA modification; tRNA-queuosine biosynthesis. In terms of biological role, catalyzes the NADPH-dependent reduction of 7-cyano-7-deazaguanine (preQ0) to 7-aminomethyl-7-deazaguanine (preQ1). This is NADPH-dependent 7-cyano-7-deazaguanine reductase from Anaeromyxobacter dehalogenans (strain 2CP-C).